The sequence spans 396 residues: uncharacterized protein (396 aa).

12 helical membrane-spanning segments follow: residues 8–28 (TASG…ILAS), 44–64 (ISYV…ISGV), 73–93 (PLVV…PLSP), 97–117 (LAFV…AGTY), 133–153 (VLVK…ITFL), 158–178 (MFYG…IIYL), 213–233 (ALII…IWLP), 250–270 (LLSY…VLLN), 276–296 (VFIT…MLTV), 304–324 (ITAF…ITLM), 338–358 (IVAT…GLIA), and 363–383 (IAHI…AAAF).

This sequence belongs to the major facilitator superfamily.

Its subcellular location is the cell membrane. This is an uncharacterized protein from Bacillus subtilis (strain 168).